Consider the following 860-residue polypeptide: Alanine--tRNA ligase (860 aa).

Positions 563, 567, 665, and 669 each coordinate Zn(2+).

Belongs to the class-II aminoacyl-tRNA synthetase family. The cofactor is Zn(2+).

It localises to the cytoplasm. The enzyme catalyses tRNA(Ala) + L-alanine + ATP = L-alanyl-tRNA(Ala) + AMP + diphosphate. Its function is as follows. Catalyzes the attachment of alanine to tRNA(Ala) in a two-step reaction: alanine is first activated by ATP to form Ala-AMP and then transferred to the acceptor end of tRNA(Ala). Also edits incorrectly charged Ser-tRNA(Ala) and Gly-tRNA(Ala) via its editing domain. This Vibrio cholerae serotype O1 (strain ATCC 39541 / Classical Ogawa 395 / O395) protein is Alanine--tRNA ligase.